We begin with the raw amino-acid sequence, 154 residues long: MARMHSRRRGSSGSDRPTADEPPEWSEVDEDAIEDRVVELAEEGYDPSQIGLKLRDEGVQGVPVPDVKLATGKKVTEILEENDAENELPEDLRNLMERAIRLREHMDRNPGDAQNKRALQNTESKIRRLVDYYRGDKLDEEFTYSYEDAKDRLE.

Basic residues predominate over residues 1–10 (MARMHSRRRG). Residues 1 to 32 (MARMHSRRRGSSGSDRPTADEPPEWSEVDEDA) form a disordered region. Acidic residues predominate over residues 21 to 32 (EPPEWSEVDEDA).

This sequence belongs to the universal ribosomal protein uS15 family. As to quaternary structure, part of the 30S ribosomal subunit.

The protein is Small ribosomal subunit protein uS15 of Natronomonas pharaonis (strain ATCC 35678 / DSM 2160 / CIP 103997 / JCM 8858 / NBRC 14720 / NCIMB 2260 / Gabara) (Halobacterium pharaonis).